Here is a 1153-residue protein sequence, read N- to C-terminus: uncharacterized protein (1153 aa).

Disordered regions lie at residues 164 to 193 (TTIK…QIDD), 224 to 245 (DNYD…DDDK), 294 to 316 (KSPQ…QSKH), 332 to 427 (EHKL…KNKK), 613 to 648 (LSML…EGEN), 683 to 703 (QQQQ…EEMS), 717 to 740 (KSDD…SKRK), 772 to 819 (NKKL…KTIE), 838 to 874 (ASSG…EDEK), and 942 to 1106 (NNNN…NNEV). Residues 169–179 (LPPPLPQPQPQ) show a composition bias toward pro residues. 4 stretches are compositionally biased toward low complexity: residues 231–240 (NNNNNNNNSN), 298–312 (KLKL…QQQK), 336–391 (QQQQ…TPKK), and 399–423 (NNVN…NNNN). Positions 613–625 (LSMLDSTNDGSSQ) are enriched in polar residues. Residues 687 to 699 (QEKEKQQQEKQQD) are compositionally biased toward basic and acidic residues. Low complexity predominate over residues 721-734 (NNNNNDNNNNNNNN). Residues 772–784 (NKKLRVDSEDQQT) show a composition bias toward basic and acidic residues. Composition is skewed to low complexity over residues 788-808 (TTTT…NNNN) and 839-854 (SSGG…QNDS). Basic and acidic residues predominate over residues 856 to 874 (TTKEKERSETIKTHNEDEK). Residues 942-987 (NNNNNNNNNINNINNIGNKNTTVNNSNHSNHSNNNINNNNIFKNSN) are compositionally biased toward low complexity. Polar residues-rich tracts occupy residues 988–998 (PIVDTNFSSTT) and 1005–1015 (QSKIFTGNQLP). The span at 1019–1059 (INNENVVNNNNNNEINNTTTTTTNNNSGIHKNNNNYNSDNS) shows a compositional bias: low complexity. Residues 1064-1081 (DGLKQEKEEQKEEQKENK) are compositionally biased toward basic and acidic residues. The span at 1082 to 1105 (NNNNNNNNNNNNNNNNNNNNNNNE) shows a compositional bias: low complexity.

This is an uncharacterized protein from Dictyostelium discoideum (Social amoeba).